The primary structure comprises 398 residues: DNA-directed RNA polymerase III subunit RPC4 (398 aa).

The segment at 1 to 105 (MSEGNAAGEP…GRGRPEVIQS (105 aa)) is disordered. Ser-2 is modified (N-acetylserine). Ser-42 carries the post-translational modification Phosphoserine. The span at 66–100 (KIKEEPKEEVTVKKEKRERDRDRQRDSHGRGRGRP) shows a compositional bias: basic and acidic residues. Glycyl lysine isopeptide (Lys-Gly) (interchain with G-Cter in SUMO2) cross-links involve residues Lys-68 and Lys-78. 3 positions are modified to omega-N-methylarginine: Arg-95, Arg-97, and Arg-99. Residues Lys-141, Lys-152, Lys-160, Lys-190, Lys-199, Lys-206, Lys-220, Lys-285, and Lys-302 each participate in a glycyl lysine isopeptide (Lys-Gly) (interchain with G-Cter in SUMO2) cross-link.

Belongs to the eukaryotic RPC4/POLR3D RNA polymerase subunit family. As to quaternary structure, component of the RNA polymerase III complex consisting of 17 subunits: a ten-subunit horseshoe-shaped catalytic core composed of POLR3A/RPC1, POLR3B/RPC2, POLR1C/RPAC1, POLR1D/RPAC2, POLR3K/RPC10, POLR2E/RPABC1, POLR2F/RPABC2, POLR2H/RPABC3, POLR2K/RPABC4 and POLR2L/RPABC5; a mobile stalk composed of two subunits POLR3H/RPC8 and CRCP/RPC9, protruding from the core and functioning primarily in transcription initiation; and additional subunits homologous to general transcription factors of the RNA polymerase II machinery, POLR3C/RPC3-POLR3F/RPC6-POLR3G/RPC7 heterotrimer required for transcription initiation and POLR3D/RPC4-POLR3E/RPC5 heterodimer involved in both transcription initiation and termination. In terms of processing, sumoylation on Lys-141 can serve as a signal to mark misfolded Pol III for proteasomal degradation.

The protein localises to the nucleus. Functionally, DNA-dependent RNA polymerase catalyzes the transcription of DNA into RNA using the four ribonucleoside triphosphates as substrates. Specific peripheric component of RNA polymerase III (Pol III) which synthesizes small non-coding RNAs including 5S rRNA, snRNAs, tRNAs and miRNAs from at least 500 distinct genomic loci. Enables recruitment of Pol III at transcription initiation site and drives transcription initiation from both type 2 and type 3 DNA promoters. Required for efficient transcription termination and reinitiation. Pol III plays a key role in sensing and limiting infection by intracellular bacteria and DNA viruses. Acts as nuclear and cytosolic DNA sensor involved in innate immune response. Can sense non-self dsDNA that serves as template for transcription into dsRNA. The non-self RNA polymerase III transcripts, such as Epstein-Barr virus-encoded RNAs (EBERs) induce type I interferon and NF-kappa-B through the RIG-I pathway. The chain is DNA-directed RNA polymerase III subunit RPC4 (POLR3D) from Bos taurus (Bovine).